The primary structure comprises 113 residues: Iron-sulfur cluster insertion protein ErpA (113 aa).

3 residues coordinate iron-sulfur cluster: Cys41, Cys105, and Cys107.

It belongs to the HesB/IscA family. Homodimer. Requires iron-sulfur cluster as cofactor.

In terms of biological role, required for insertion of 4Fe-4S clusters for at least IspG. The sequence is that of Iron-sulfur cluster insertion protein ErpA from Aliivibrio salmonicida (strain LFI1238) (Vibrio salmonicida (strain LFI1238)).